A 481-amino-acid polypeptide reads, in one-letter code: Aspartyl/glutamyl-tRNA(Asn/Gln) amidotransferase subunit B (481 aa).

Belongs to the GatB/GatE family. GatB subfamily. As to quaternary structure, heterotrimer of A, B and C subunits.

The catalysed reaction is L-glutamyl-tRNA(Gln) + L-glutamine + ATP + H2O = L-glutaminyl-tRNA(Gln) + L-glutamate + ADP + phosphate + H(+). It carries out the reaction L-aspartyl-tRNA(Asn) + L-glutamine + ATP + H2O = L-asparaginyl-tRNA(Asn) + L-glutamate + ADP + phosphate + 2 H(+). Functionally, allows the formation of correctly charged Asn-tRNA(Asn) or Gln-tRNA(Gln) through the transamidation of misacylated Asp-tRNA(Asn) or Glu-tRNA(Gln) in organisms which lack either or both of asparaginyl-tRNA or glutaminyl-tRNA synthetases. The reaction takes place in the presence of glutamine and ATP through an activated phospho-Asp-tRNA(Asn) or phospho-Glu-tRNA(Gln). The sequence is that of Aspartyl/glutamyl-tRNA(Asn/Gln) amidotransferase subunit B from Pseudomonas putida (strain W619).